Here is a 66-residue protein sequence, read N- to C-terminus: Large ribosomal subunit protein bL35 (66 aa).

The protein belongs to the bacterial ribosomal protein bL35 family.

The protein is Large ribosomal subunit protein bL35 of Deinococcus deserti (strain DSM 17065 / CIP 109153 / LMG 22923 / VCD115).